Reading from the N-terminus, the 199-residue chain is Recombination protein RecR (199 aa).

The segment at 58 to 73 adopts a C4-type zinc-finger fold; that stretch reads CRRCFNLTEGEECDIC. A Toprim domain is found at 81–176; sequence SVICVVEDPY…RVTALASGLP (96 aa).

The protein belongs to the RecR family.

Functionally, may play a role in DNA repair. It seems to be involved in an RecBC-independent recombinational process of DNA repair. It may act with RecF and RecO. In Rubrobacter xylanophilus (strain DSM 9941 / JCM 11954 / NBRC 16129 / PRD-1), this protein is Recombination protein RecR.